Consider the following 105-residue polypeptide: L-rhamnose mutarotase (105 aa).

Substrate is bound at residue Tyr19. The Proton donor role is filled by His23. Residues Tyr42 and 77–78 (WW) contribute to the substrate site.

This sequence belongs to the rhamnose mutarotase family. Homodimer.

It localises to the cytoplasm. The enzyme catalyses alpha-L-rhamnose = beta-L-rhamnose. It functions in the pathway carbohydrate metabolism; L-rhamnose metabolism. Functionally, involved in the anomeric conversion of L-rhamnose. The protein is L-rhamnose mutarotase of Mesorhizobium japonicum (strain LMG 29417 / CECT 9101 / MAFF 303099) (Mesorhizobium loti (strain MAFF 303099)).